The following is a 452-amino-acid chain: 5'-nucleotidase domain-containing protein 1 (452 aa).

The active-site Nucleophile is Asp16. Mg(2+)-binding residues include Asp16 and Asp18. Asp18 functions as the Proton donor in the catalytic mechanism. Residue Lys171 is modified to N6-acetyllysine. Asp313 is a Mg(2+) binding site. Over residues 339 to 361 (GDKDGKPEESEPEEKKGKYEGSK) the composition is skewed to basic and acidic residues. Positions 339–365 (GDKDGKPEESEPEEKKGKYEGSKAKPL) are disordered.

It belongs to the 5'(3')-deoxyribonucleotidase family.

This chain is 5'-nucleotidase domain-containing protein 1 (NT5DC1), found in Bos taurus (Bovine).